A 273-amino-acid polypeptide reads, in one-letter code: MALEKIIRESLTGFIQCHIPHADLSALDEVFYAYATGVLEELGSQNSSEEDFEMESFVEMLEAYIPGFSEISSGKVYDMLFELSRRLSEARGKENVSPKPTAEVSFMTPTSSSTESSKKIETEPLEGAVAQEKDDAKNGIDLLLEIFPSCTVSQAQTALSMAKGDLEDAVQIIVDGKVIADNHSGSKDLQGAPKTDDLKDFILQKYMLVDTEDDKKTYRPVAPKEAPKKMIRYIDNQVVSTKGERYKDIKKPESEEMKKTYINLKPARKYKFH.

The tract at residues 92–121 (GKENVSPKPTAEVSFMTPTSSSTESSKKIE) is disordered. One can recognise a CUE domain in the interval 135 to 178 (DAKNGIDLLLEIFPSCTVSQAQTALSMAKGDLEDAVQIIVDGKV).

The protein belongs to the CUEDC2 family. Phosphorylated.

The protein resides in the cytoplasm. The protein localises to the nucleus. May play a role in targeting proteins for ubiquitination and subsequent proteasomal degradation. The chain is CUE domain-containing protein 2-A (cuedc2-a) from Xenopus laevis (African clawed frog).